A 747-amino-acid polypeptide reads, in one-letter code: Mediator of RNA polymerase II transcription subunit 25 (747 aa).

The segment at 1 to 226 (MVPGSEGPAR…PRHMVLVRGL (226 aa)) is interaction with the Mediator complex. Disordered regions lie at residues 233 to 274 (GSAP…QYQV) and 299 to 390 (LGPR…PALG). Pro residues-rich tracts occupy residues 263–272 (QPLPPVPPQY) and 326–342 (PQLP…PPAS). Residues 389 to 543 (LGGQQSVSNK…VNGIRQVITN (155 aa)) form an interaction with VP16 region. The interaction with CREBBP stretch occupies residues 395–545 (VSNKLLAWSG…GIRQVITNHK (151 aa)). Residues 548 to 747 (QQQKLEQQQR…MEDDILMDLI (200 aa)) are disordered. Interaction with RARA stretches follow at residues 564 to 653 (APPG…LLNP) and 640 to 707 (PGAN…WPAQ). Residues 598–611 (ASGATGQPQPQGTA) are compositionally biased toward low complexity. Pro residues predominate over residues 612–634 (QPPPGAPQGPPGAASGPPPPGPI). Positions 646–650 (LRSLL) match the LXXLL motif motif. Composition is skewed to pro residues over residues 652–664 (NPPP…PPPQ), 673–683 (PGAPALLPPPH), and 691–713 (LGPP…PRAP). R725 bears the Asymmetric dimethylarginine mark. Residues 738–747 (MEDDILMDLI) show a composition bias toward acidic residues.

This sequence belongs to the Mediator complex subunit 25 family. In terms of assembly, component of the Mediator complex, which is composed of MED1, MED4, MED6, MED7, MED8, MED9, MED10, MED11, MED12, MED13, MED13L, MED14, MED15, MED16, MED17, MED18, MED19, MED20, MED21, MED22, MED23, MED24, MED25, MED26, MED27, MED29, MED30, MED31, CCNC, CDK8 and CDC2L6/CDK11. The MED12, MED13, CCNC and CDK8 subunits form a distinct module termed the CDK8 module. Mediator containing the CDK8 module is less active than Mediator lacking this module in supporting transcriptional activation. Individual preparations of the Mediator complex lacking one or more distinct subunits have been variously termed ARC, CRSP, DRIP, PC2, SMCC and TRAP. Interacts with CREBBP. Interacts with ESR1, GR, RARA, RXRA and THRB in a ligand-dependent fashion. Binds the Herpes simplex virus activator VP16. Ubiquitously expressed. Highest levels in brain, heart, kidney, peripheral leukocytes, placenta, skeletal muscle and spleen.

Its subcellular location is the nucleus. Functionally, component of the Mediator complex, a coactivator involved in the regulated transcription of nearly all RNA polymerase II-dependent genes. Mediator functions as a bridge to convey information from gene-specific regulatory proteins to the basal RNA polymerase II transcription machinery. Mediator is recruited to promoters by direct interactions with regulatory proteins and serves as a scaffold for the assembly of a functional preinitiation complex with RNA polymerase II and the general transcription factors. Required for RARA/RXRA-mediated transcription. The sequence is that of Mediator of RNA polymerase II transcription subunit 25 (MED25) from Homo sapiens (Human).